Reading from the N-terminus, the 449-residue chain is Probable glycine dehydrogenase (decarboxylating) subunit 1 (449 aa).

Belongs to the GcvP family. N-terminal subunit subfamily. As to quaternary structure, the glycine cleavage system is composed of four proteins: P, T, L and H. In this organism, the P 'protein' is a heterodimer of two subunits.

It catalyses the reaction N(6)-[(R)-lipoyl]-L-lysyl-[glycine-cleavage complex H protein] + glycine + H(+) = N(6)-[(R)-S(8)-aminomethyldihydrolipoyl]-L-lysyl-[glycine-cleavage complex H protein] + CO2. Functionally, the glycine cleavage system catalyzes the degradation of glycine. The P protein binds the alpha-amino group of glycine through its pyridoxal phosphate cofactor; CO(2) is released and the remaining methylamine moiety is then transferred to the lipoamide cofactor of the H protein. This chain is Probable glycine dehydrogenase (decarboxylating) subunit 1, found in Rhodospirillum centenum (strain ATCC 51521 / SW).